The following is a 588-amino-acid chain: Aspartate--tRNA ligase (588 aa).

Glutamate 172 is an L-aspartate binding site. Residues 196–199 are aspartate; it reads QLFK. Arginine 218 is a binding site for L-aspartate. ATP contacts are provided by residues 218–220 and glutamine 227; that span reads RDE. Residue histidine 449 coordinates L-aspartate. An ATP-binding site is contributed by glutamate 483. Arginine 490 contacts L-aspartate. 535–538 lines the ATP pocket; sequence GLDR.

Belongs to the class-II aminoacyl-tRNA synthetase family. Type 1 subfamily. As to quaternary structure, homodimer.

It is found in the cytoplasm. It carries out the reaction tRNA(Asp) + L-aspartate + ATP = L-aspartyl-tRNA(Asp) + AMP + diphosphate. Functionally, catalyzes the attachment of L-aspartate to tRNA(Asp) in a two-step reaction: L-aspartate is first activated by ATP to form Asp-AMP and then transferred to the acceptor end of tRNA(Asp). This Haemophilus influenzae (strain PittEE) protein is Aspartate--tRNA ligase.